A 687-amino-acid polypeptide reads, in one-letter code: T-box transcription factor TBX2b (687 aa).

The T-box DNA-binding region spans 103–276 (LWDQFHKLGT…NNPFAKGFRD (174 aa)). Disordered stretches follow at residues 303–452 (DRDG…ESPS) and 611–687 (NLLT…DSPK). 3 stretches are compositionally biased toward basic and acidic residues: residues 338–357 (GSRDDKTCTDSEHEMDHQND), 375–400 (SRSEDWGREKPIAEKKDDYPDSRKTS), and 408–430 (NLEKDKLESRSRKDTDSSKKDTE). Polar residues-rich tracts occupy residues 431-451 (NSGISGSKDSFSPLMVQTESP), 611-630 (NLLTTGLPSGLNPSSESSKC), and 644-654 (GASQRNGSPKT). Positions 654–681 (TTMKESINELQNIQRLVSGLESQRETSS) form a coiled coil. Residues 675–687 (SQRETSSPRDSPK) are compositionally biased toward basic and acidic residues.

Binds DNA as a monomer. In terms of tissue distribution, expressed in the axial mesoderm, notably, in the notochordal precursor cells immediately before formation of the notochord and in the chordoneural hinge of the tail bud, after the notochord is formed. In addition, its expression is detected in the ventral forebrain, sensory neurons, fin buds and excretory system.

The protein localises to the nucleus. In terms of biological role, transcription factor which acts as a transcriptional repressor. May also function as a transcriptional activator. Binds to the palindromic T site 5'-TTCACACCTAGGTGTGAA-3' DNA sequence, or a half-site, which are present in the regulatory region of several genes. Involved in the transcriptional regulation of genes required for mesoderm differentiation. Plays a role in the specification of late notochordal precursor cells and formation of the differentiated notochord. Required for cardiac atrioventricular canal formation. In Danio rerio (Zebrafish), this protein is T-box transcription factor TBX2b (tbx2b).